Consider the following 776-residue polypeptide: Zinc finger CCCH-type antiviral protein 1 (776 aa).

Residue Ala-2 is modified to N-acetylalanine. The interval Ala-2–Leu-254 is N-terminal domain. Residues Arg-69 to Lys-76 carry the Nuclear localization signal motif. 4 C3H1-type zinc fingers span residues Cys-73 to His-86, Cys-88 to His-110, Cys-150 to His-172, and Glu-169 to Leu-193. The disordered stretch occupies residues Asn-221–Ser-249. The tract at residues Ala-224–Leu-254 is binding to EXOSC5. Residues Ser-257, Ser-262, Ser-266, and Ser-270 each carry the phosphoserine; by GSK3-beta modification. Position 274 is a phosphoserine (Ser-274). Thr-278 carries the phosphothreonine modification. Residue Ser-283 is modified to Phosphoserine. Residues Leu-284–Val-291 carry the Nuclear export signal motif. A disordered region spans residues Pro-308–Val-355. Polar residues predominate over residues Gly-318–Glu-327. A phosphoserine mark is found at Ser-325, Ser-351, and Ser-398. The span at Asp-344 to Ala-353 shows a compositional bias: low complexity. The Nuclear localization signal signature appears at Lys-405–Lys-406. A disordered region spans residues Trp-457–Ser-483. Over residues Ser-459–Ser-483 the composition is skewed to polar residues. Residue Tyr-501 is modified to Phosphotyrosine. The disordered stretch occupies residues Leu-512–Arg-562. Positions Gln-523–Gly-546 are enriched in low complexity. Ser-544 and Ser-667 each carry phosphoserine. Residues Tyr-671–Arg-758 enclose the WWE domain.

The protein belongs to the ARTD/PARP family. In terms of assembly, homodimer or homooligomer. Homooligomerization is essential for its antiviral activity. Interacts with EXOSC5. Interacts with EXOSC3, EXOSC7, DCP2 and DCP1A. Interacts with PARN in an RNA-independent manner. Interacts with XRN1 in an RNA-dependent manner. Interacts (via N-terminal domain) with DHX30 (via N-terminus) in an RNA-independent manner. Interacts (via N-terminal domain) with DDX17 in an RNA-independent manner. Post-translationally, phosphorylation at Ser-274 is essential for sequential phosphorylation of Ser-270, Ser-266, Ser-262 and Ser-257 by GSK3-beta. Phosphorylation by GSK3-beta enhances its antiviral activity. In terms of tissue distribution, expressed in the kidney and liver.

It is found in the cytoplasm. The protein resides in the nucleus. Functionally, antiviral protein which inhibits the replication of viruses by recruiting the cellular RNA degradation machineries to degrade the viral mRNAs. Binds to a ZAP-responsive element (ZRE) present in the target viral mRNA, recruits cellular poly(A)-specific ribonuclease PARN to remove the poly(A) tail, and the 3'-5' exoribonuclease complex exosome to degrade the RNA body from the 3'-end. It also recruits the decapping complex DCP1-DCP2 through RNA helicase p72 (DDX17) to remove the cap structure of the viral mRNA to initiate its degradation from the 5'-end. Its target viruses belong to families which include retroviridae: human immunodeficiency virus type 1 (HIV-1) and moloney and murine leukemia virus (MoMLV), filoviridae: ebola virus (EBOV) and marburg virus (MARV), togaviridae: sindbis virus (SINV) and Ross river virus (RRV). Specifically targets the multiply spliced but not unspliced or singly spliced HIV-1 mRNAs for degradation. The sequence is that of Zinc finger CCCH-type antiviral protein 1 (Zc3hav1) from Rattus norvegicus (Rat).